Here is a 612-residue protein sequence, read N- to C-terminus: Elongation factor 4 (612 aa).

Residues 11–193 (KHIRNFSIVA…EIVKKVPAPN (183 aa)) form the tr-type G domain. GTP is bound by residues 23 to 28 (DHGKST) and 140 to 143 (NKID).

It belongs to the TRAFAC class translation factor GTPase superfamily. Classic translation factor GTPase family. LepA subfamily.

It localises to the cell membrane. The catalysed reaction is GTP + H2O = GDP + phosphate + H(+). Required for accurate and efficient protein synthesis under certain stress conditions. May act as a fidelity factor of the translation reaction, by catalyzing a one-codon backward translocation of tRNAs on improperly translocated ribosomes. Back-translocation proceeds from a post-translocation (POST) complex to a pre-translocation (PRE) complex, thus giving elongation factor G a second chance to translocate the tRNAs correctly. Binds to ribosomes in a GTP-dependent manner. This chain is Elongation factor 4, found in Lactobacillus gasseri (strain ATCC 33323 / DSM 20243 / BCRC 14619 / CIP 102991 / JCM 1131 / KCTC 3163 / NCIMB 11718 / NCTC 13722 / AM63).